The chain runs to 478 residues: 2-succinylbenzoate--CoA ligase (478 aa).

Belongs to the ATP-dependent AMP-binding enzyme family. MenE subfamily.

It catalyses the reaction 2-succinylbenzoate + ATP + CoA = 2-succinylbenzoyl-CoA + AMP + diphosphate. It functions in the pathway quinol/quinone metabolism; 1,4-dihydroxy-2-naphthoate biosynthesis; 1,4-dihydroxy-2-naphthoate from chorismate: step 5/7. The protein operates within quinol/quinone metabolism; menaquinone biosynthesis. Converts 2-succinylbenzoate (OSB) to 2-succinylbenzoyl-CoA (OSB-CoA). The protein is 2-succinylbenzoate--CoA ligase of Bacillus licheniformis (strain ATCC 14580 / DSM 13 / JCM 2505 / CCUG 7422 / NBRC 12200 / NCIMB 9375 / NCTC 10341 / NRRL NRS-1264 / Gibson 46).